The primary structure comprises 506 residues: Glutamate--tRNA ligase (506 aa).

The 'HIGH' region motif lies at 12 to 22; sequence PSPTGDPHVGT. A 'KMSKS' region motif is present at residues 253–257; that stretch reads KLSKR. Lysine 256 provides a ligand contact to ATP.

This sequence belongs to the class-I aminoacyl-tRNA synthetase family. Glutamate--tRNA ligase type 1 subfamily. Monomer.

Its subcellular location is the cytoplasm. It catalyses the reaction tRNA(Glu) + L-glutamate + ATP = L-glutamyl-tRNA(Glu) + AMP + diphosphate. Catalyzes the attachment of glutamate to tRNA(Glu) in a two-step reaction: glutamate is first activated by ATP to form Glu-AMP and then transferred to the acceptor end of tRNA(Glu). This Chlamydia trachomatis serovar L2 (strain ATCC VR-902B / DSM 19102 / 434/Bu) protein is Glutamate--tRNA ligase.